A 766-amino-acid polypeptide reads, in one-letter code: Ubiquitin carboxyl-terminal hydrolase creB (766 aa).

The segment at 1-32 (MGSFLKSFRKDVGSAAPSVGAPPAKKEPQPLP) is disordered. The segment covering 13–23 (GSAAPSVGAPP) has biased composition (low complexity). A USP domain is found at 55–466 (YGMENFGNTC…CAYVLFYQET (412 aa)). Residue C64 is the Nucleophile of the active site. Disordered stretches follow at residues 115-145 (EALAEKQKAANSPRPGQPPNPQQKPEDKDSP) and 243-266 (ESPQPASDVSDSVIPSSSSGSRTP). A compositionally biased stretch (low complexity) spans 249–263 (SDVSDSVIPSSSSGS). H417 serves as the catalytic Proton acceptor. A disordered region spans residues 526-752 (APTAPQLSTH…HDRSSHGKWR (227 aa)). The span at 548–572 (SPAPDPAPLTSLPPIPPIPETPPAP) shows a compositional bias: pro residues. Positions 573-620 (LTSRKSDLQSKKERVKEEKERKAAEKEKEKQRRKEIETRLKDRQRRED) form a coiled coil. Composition is skewed to basic and acidic residues over residues 576-643 (RKSD…RNHA) and 734-747 (EQEHIKNSKHDRSS).

It belongs to the peptidase C19 family. As to quaternary structure, interacts with creA, creC and qutD.

The enzyme catalyses Thiol-dependent hydrolysis of ester, thioester, amide, peptide and isopeptide bonds formed by the C-terminal Gly of ubiquitin (a 76-residue protein attached to proteins as an intracellular targeting signal).. Ubiquitin thioesterase component of the regulatory network controlling carbon source utilization through ubiquitination and deubiquitination involving creA, creB, creC, creD and acrB. Deubiquitinates the creA catabolic repressor and the quinate permease qutD. Also plays a role in response to carbon starvation and the control of extracellular proteases activity. This is Ubiquitin carboxyl-terminal hydrolase creB (creB) from Emericella nidulans (strain FGSC A4 / ATCC 38163 / CBS 112.46 / NRRL 194 / M139) (Aspergillus nidulans).